The primary structure comprises 302 residues: Recombination-associated protein RdgC (302 aa).

It belongs to the RdgC family.

The protein localises to the cytoplasm. The protein resides in the nucleoid. Functionally, may be involved in recombination. In Xylella fastidiosa (strain M12), this protein is Recombination-associated protein RdgC.